Consider the following 350-residue polypeptide: MDYKSGLIPDGNAMENLEKQLICPICLEMFTKPVVILPCQHNLCRKCANDIFQAANPYWTNRGGSVSMSGGRFRCPSCRHEVIMDRHGVYGLQRNLLVENIIDIYKQECSSRPLQKGSHPMCKEHEDEKINIYCLTCEVPTCSLCKVFGAHQACEVAPLQSIFQGQKTELSNCISMLVAGNDRVQTIISQLVDSCRVTKENSHQVKEELSQKFDTLYAILDEKKSELLQRITQEQEEKLGFIEALILQYREQLEKSTKLVETAIQSLDEPGGATFLSSAKQLIKSNVEASKGCQLGKTEQGFENMDYFTLDLEHIAEALRAIDFGTDEEEEEFTEEEADEEEGVTTEGHQ.

Residues 23 to 79 (CPICLEMFTKPVVILPCQHNLCRKCANDIFQAANPYWTNRGGSVSMSGGRFRCPSCR) form an RING-type zinc finger. An interaction with TTN region spans residues 74–218 (RCPSCRHEVI…LSQKFDTLYA (145 aa)). A B box-type zinc finger spans residues 117–159 (GSHPMCKEHEDEKINIYCLTCEVPTCSLCKVFGAHQACEVAPL). Zn(2+) contacts are provided by Cys122, His125, Cys145, and His151. Positions 207–269 (EELSQKFDTL…VETAIQSLDE (63 aa)) form a coiled coil. Residues 267 to 325 (LDEPGGATFLSSAKQLIKSNVEASKGCQLGKTEQGFENMDYFTLDLEHIAEALRAIDFG) form the COS domain. Over residues 325–344 (GTDEEEEEFTEEEADEEEGV) the composition is skewed to acidic residues. Residues 325–350 (GTDEEEEEFTEEEADEEEGVTTEGHQ) are disordered.

Homodimer. Homooligomer and heterooligomer. Interacts with SUMO2, titin/TTN and GMEB1. Interacts with TRIM54 and probably with TRIM55. Interacts with TNNI3. Forms a ternary complex with RACK1 and PRKCE. Interacts with CKM.

It localises to the cytoplasm. Its subcellular location is the nucleus. The protein resides in the myofibril. It is found in the sarcomere. The protein localises to the m line. It localises to the z line. The catalysed reaction is S-ubiquitinyl-[E2 ubiquitin-conjugating enzyme]-L-cysteine + [acceptor protein]-L-lysine = [E2 ubiquitin-conjugating enzyme]-L-cysteine + N(6)-ubiquitinyl-[acceptor protein]-L-lysine.. Its pathway is protein modification; protein ubiquitination. In terms of biological role, E3 ubiquitin ligase. Mediates the ubiquitination and subsequent proteasomal degradation of CKM, GMEB1 and HIBADH. Regulates the proteasomal degradation of muscle proteins under amino acid starvation, where muscle protein is catabolized to provide other organs with amino acids. Inhibits de novo skeletal muscle protein synthesis under amino acid starvation. Regulates proteasomal degradation of cardiac troponin I/TNNI3 and probably of other sarcomeric-associated proteins. May play a role in striated muscle atrophy and hypertrophy by regulating an anti-hypertrophic PKC-mediated signaling pathway. May regulate the organization of myofibrils through TTN in muscle cells. The polypeptide is E3 ubiquitin-protein ligase TRIM63 (Trim63) (Mus musculus (Mouse)).